Reading from the N-terminus, the 402-residue chain is Tryptophan synthase beta chain (402 aa).

Lys92 bears the N6-(pyridoxal phosphate)lysine mark.

Belongs to the TrpB family. Tetramer of two alpha and two beta chains. It depends on pyridoxal 5'-phosphate as a cofactor.

The enzyme catalyses (1S,2R)-1-C-(indol-3-yl)glycerol 3-phosphate + L-serine = D-glyceraldehyde 3-phosphate + L-tryptophan + H2O. It participates in amino-acid biosynthesis; L-tryptophan biosynthesis; L-tryptophan from chorismate: step 5/5. In terms of biological role, the beta subunit is responsible for the synthesis of L-tryptophan from indole and L-serine. The protein is Tryptophan synthase beta chain of Staphylococcus epidermidis (strain ATCC 35984 / DSM 28319 / BCRC 17069 / CCUG 31568 / BM 3577 / RP62A).